A 137-amino-acid polypeptide reads, in one-letter code: Fluoride-specific ion channel FluC 1 (137 aa).

A run of 4 helical transmembrane segments spans residues 4–24 (LIYI…YYLG), 37–57 (LATL…TTYI), 67–87 (VITG…TFSV), and 100–120 (IAFL…GLGY). Residues G77 and T80 each coordinate Na(+).

The protein belongs to the fluoride channel Fluc/FEX (TC 1.A.43) family.

The protein localises to the cell membrane. It carries out the reaction fluoride(in) = fluoride(out). Its activity is regulated as follows. Na(+) is not transported, but it plays an essential structural role and its presence is essential for fluoride channel function. Fluoride-specific ion channel. Important for reducing fluoride concentration in the cell, thus reducing its toxicity. This is Fluoride-specific ion channel FluC 1 from Bacillus thuringiensis subsp. konkukian (strain 97-27).